A 362-amino-acid chain; its full sequence is Peptide chain release factor 1 (362 aa).

Q237 carries the post-translational modification N5-methylglutamine.

It belongs to the prokaryotic/mitochondrial release factor family. In terms of processing, methylated by PrmC. Methylation increases the termination efficiency of RF1.

Its subcellular location is the cytoplasm. Its function is as follows. Peptide chain release factor 1 directs the termination of translation in response to the peptide chain termination codons UAG and UAA. This Vibrio parahaemolyticus serotype O3:K6 (strain RIMD 2210633) protein is Peptide chain release factor 1.